The primary structure comprises 386 residues: Homoserine O-succinyltransferase (386 aa).

Residues 49-358 (NAILICHALS…DAEQGHDSFL (310 aa)) enclose the AB hydrolase-1 domain. S156 functions as the Nucleophile in the catalytic mechanism. R226 contributes to the substrate binding site. Catalysis depends on residues D321 and H354. Residue D355 coordinates substrate.

This sequence belongs to the AB hydrolase superfamily. MetX family. Homodimer.

The protein resides in the cytoplasm. The catalysed reaction is L-homoserine + succinyl-CoA = O-succinyl-L-homoserine + CoA. The protein operates within amino-acid biosynthesis; L-methionine biosynthesis via de novo pathway; O-succinyl-L-homoserine from L-homoserine: step 1/1. Transfers a succinyl group from succinyl-CoA to L-homoserine, forming succinyl-L-homoserine. The protein is Homoserine O-succinyltransferase of Acinetobacter baumannii (strain ACICU).